We begin with the raw amino-acid sequence, 109 residues long: MGTFRRRRRFLLAALVTFALLHLFSASSIVSADGRWIGQRTGSDLPGGFIRSNKRFGGPGSSPPTCRSKCGKCQPCKPVHVPIQPGLSMPLEYYPEAWRCKCGNKLFMP.

A signal peptide spans Met-1–Ala-26. 3 disulfides stabilise this stretch: Cys-66/Cys-100, Cys-70/Cys-76, and Cys-73/Cys-102.

The protein belongs to the plant cysteine rich small secretory peptide family. Epidermal patterning factor subfamily. As to quaternary structure, interacts with ERECTA. As to expression, expressed at the base of the apical meristem at 3 days after germination. Not detected in the hypocotyl. Expressed in developing stems soon after bolting, in inflorescence stems and in young siliques.

The protein localises to the secreted. In terms of biological role, acts primarily as positive regulator of inflorescence growth. Endodermal expression is sufficient for proper inflorescence architecture. Redundantly involved with EPFL6 in procambial development regulation. Controls stomatal patterning. Mediates stomatal development inhibition. TMM (AC Q9SSD1) functions to dampen or block CLL2 signaling. Acts as a growth-regulatory ligand for ERECTA family receptors. This is EPIDERMAL PATTERNING FACTOR-like protein 4 from Arabidopsis thaliana (Mouse-ear cress).